The following is a 190-amino-acid chain: dITP/XTP pyrophosphatase (190 aa).

Ser7–Lys12 is a substrate binding site. Asp68 serves as the catalytic Proton acceptor. A Mg(2+)-binding site is contributed by Asp68. Residues Thr69, Phe148 to Asp151, Lys171, and His176 to Arg177 contribute to the substrate site.

The protein belongs to the HAM1 NTPase family. As to quaternary structure, homodimer. Mg(2+) serves as cofactor.

It carries out the reaction XTP + H2O = XMP + diphosphate + H(+). The catalysed reaction is dITP + H2O = dIMP + diphosphate + H(+). The enzyme catalyses ITP + H2O = IMP + diphosphate + H(+). Functionally, pyrophosphatase that catalyzes the hydrolysis of nucleoside triphosphates to their monophosphate derivatives, with a high preference for the non-canonical purine nucleotides XTP (xanthosine triphosphate), dITP (deoxyinosine triphosphate) and ITP. Seems to function as a house-cleaning enzyme that removes non-canonical purine nucleotides from the nucleotide pool, thus preventing their incorporation into DNA/RNA and avoiding chromosomal lesions. This is dITP/XTP pyrophosphatase from Flavobacterium psychrophilum (strain ATCC 49511 / DSM 21280 / CIP 103535 / JIP02/86).